A 343-amino-acid polypeptide reads, in one-letter code: Dihydroorotate dehydrogenase (quinone) (343 aa).

FMN is bound by residues 65-69 (AGFDK) and threonine 89. Lysine 69 is a binding site for substrate. Substrate is bound at residue 114 to 118 (NRMGF). FMN contacts are provided by asparagine 145 and asparagine 178. Asparagine 178 contacts substrate. The active-site Nucleophile is serine 181. Asparagine 183 is a binding site for substrate. FMN contacts are provided by lysine 215 and threonine 243. Residue 244-245 (NT) participates in substrate binding. FMN-binding positions include glycine 269, glycine 298, and 319-320 (YT).

It belongs to the dihydroorotate dehydrogenase family. Type 2 subfamily. As to quaternary structure, monomer. FMN serves as cofactor.

It is found in the cell membrane. The enzyme catalyses (S)-dihydroorotate + a quinone = orotate + a quinol. Its pathway is pyrimidine metabolism; UMP biosynthesis via de novo pathway; orotate from (S)-dihydroorotate (quinone route): step 1/1. Functionally, catalyzes the conversion of dihydroorotate to orotate with quinone as electron acceptor. The protein is Dihydroorotate dehydrogenase (quinone) of Leifsonia xyli subsp. xyli (strain CTCB07).